Reading from the N-terminus, the 396-residue chain is Elongation factor Tu (396 aa).

Positions 10–205 (KEHVNIGTIG…AVDNYIETPV (196 aa)) constitute a tr-type G domain. Residues 19–26 (GHVDHGKT) form a G1 region. GTP is bound at residue 19–26 (GHVDHGKT). Mg(2+) is bound at residue threonine 26. The G2 stretch occupies residues 60 to 64 (GITIN). The tract at residues 81–84 (DCPG) is G3. Residues 81-85 (DCPGH) and 136-139 (NKVD) each bind GTP. The segment at 136–139 (NKVD) is G4. Positions 175 to 177 (SAL) are G5.

It belongs to the TRAFAC class translation factor GTPase superfamily. Classic translation factor GTPase family. EF-Tu/EF-1A subfamily. In terms of assembly, monomer.

Its subcellular location is the cytoplasm. It catalyses the reaction GTP + H2O = GDP + phosphate + H(+). In terms of biological role, GTP hydrolase that promotes the GTP-dependent binding of aminoacyl-tRNA to the A-site of ribosomes during protein biosynthesis. This chain is Elongation factor Tu, found in Mycoplasmopsis pulmonis (strain UAB CTIP) (Mycoplasma pulmonis).